The following is a 34-amino-acid chain: Protamine (34 aa).

The disordered stretch occupies residues 1-34 (PRRRRQASRPVRRRRRTRRSTAERRRRRVVRRRR).

As to expression, testis.

Its subcellular location is the nucleus. The protein localises to the chromosome. In terms of biological role, protamines substitute for histones in the chromatin of sperm during the haploid phase of spermatogenesis. They compact sperm DNA into a highly condensed, stable and inactive complex. This Dicentrarchus labrax (European seabass) protein is Protamine.